A 392-amino-acid chain; its full sequence is Galactose-1-phosphate uridylyltransferase (392 aa).

Residues cysteine 52 and cysteine 55 each contribute to the Zn(2+) site. UDP-alpha-D-glucose contacts are provided by residues alanine 61 and 77–78 (ND). A Zn(2+)-binding site is contributed by histidine 126. Asparagine 194 is a UDP-alpha-D-glucose binding site. Histidine 205 lines the Zn(2+) pocket. Histidine 207 serves as the catalytic Tele-UMP-histidine intermediate. Residue glutamine 209 coordinates UDP-alpha-D-glucose. Fe cation-binding residues include glutamate 223, histidine 323, histidine 340, and histidine 342. Residues 355–358 (KFLV) and 360–361 (YE) each bind UDP-alpha-D-glucose.

The protein belongs to the galactose-1-phosphate uridylyltransferase type 1 family. In terms of assembly, homodimer. Requires Zn(2+) as cofactor.

It catalyses the reaction alpha-D-galactose 1-phosphate + UDP-alpha-D-glucose = alpha-D-glucose 1-phosphate + UDP-alpha-D-galactose. The protein operates within carbohydrate metabolism; galactose metabolism. The polypeptide is Galactose-1-phosphate uridylyltransferase (gal-7) (Neurospora crassa (strain ATCC 24698 / 74-OR23-1A / CBS 708.71 / DSM 1257 / FGSC 987)).